The primary structure comprises 174 residues: Ubiquitin-fold modifier-conjugating enzyme 1 (174 aa).

Cys119 (glycyl thioester intermediate) is an active-site residue.

It belongs to the ubiquitin-conjugating enzyme family. UFC1 subfamily.

In terms of biological role, E2-like enzyme which forms an intermediate with UFM1 via a thioester linkage. This Arabidopsis thaliana (Mouse-ear cress) protein is Ubiquitin-fold modifier-conjugating enzyme 1.